The chain runs to 227 residues: Nudix hydrolase 27, chloroplastic (227 aa).

Residues 1-44 constitute a chloroplast transit peptide; sequence MAVKASGFIGKSAISVHLDFSSFPVKFSCLKQFSVSSPKPLVVL. Positions 61–208 constitute a Nudix hydrolase domain; sequence GYRKNVGICL…KRPVYEHVIK (148 aa). The short motif at 94–115 is the Nudix box element; sequence GGADEGEDLRNAAFRELREETG. Mn(2+)-binding residues include glutamate 109 and glutamate 113.

It belongs to the Nudix hydrolase family. It depends on Mg(2+) as a cofactor. Mn(2+) is required as a cofactor. In terms of tissue distribution, expressed in roots, leaves, stems and inflorescences.

The protein resides in the plastid. The protein localises to the chloroplast. Functionally, mediates the hydrolysis of some nucleoside diphosphate derivatives. Can use diadenosine 5',5'''-P(1)P(5) pentaphosphate (Ap(5)A) as substrates. This Arabidopsis thaliana (Mouse-ear cress) protein is Nudix hydrolase 27, chloroplastic (NUDT27).